The chain runs to 147 residues: Sec-independent protein translocase protein TatB (147 aa).

Residues 1-21 form a helical membrane-spanning segment; the sequence is MFDIGFWELVVIGVVALVVLG. Residues 114 to 147 are disordered; the sequence is EPVAPISVATPDEEPTVIPAARAQPSAEQGEVKP.

The protein belongs to the TatB family. As to quaternary structure, the Tat system comprises two distinct complexes: a TatABC complex, containing multiple copies of TatA, TatB and TatC subunits, and a separate TatA complex, containing only TatA subunits. Substrates initially bind to the TatABC complex, which probably triggers association of the separate TatA complex to form the active translocon.

It is found in the cell inner membrane. In terms of biological role, part of the twin-arginine translocation (Tat) system that transports large folded proteins containing a characteristic twin-arginine motif in their signal peptide across membranes. Together with TatC, TatB is part of a receptor directly interacting with Tat signal peptides. TatB may form an oligomeric binding site that transiently accommodates folded Tat precursor proteins before their translocation. In Aeromonas hydrophila subsp. hydrophila (strain ATCC 7966 / DSM 30187 / BCRC 13018 / CCUG 14551 / JCM 1027 / KCTC 2358 / NCIMB 9240 / NCTC 8049), this protein is Sec-independent protein translocase protein TatB.